Reading from the N-terminus, the 203-residue chain is Ponticulin-like protein H (203 aa).

The first 20 residues, 1–20 (MKLLNSLVLLAALCAITANG), serve as a signal peptide directing secretion. N-linked (GlcNAc...) asparagine glycosylation occurs at Asn-58. Residues 127–168 (SDSTNPTSTPSTTPSATPTVTPSTTPTVTPTVTPSTTPTVAP) show a composition bias toward low complexity. The interval 127–183 (SDSTNPTSTPSTTPSATPTVTPSTTPTVTPTVTPSTTPTVAPTVPPTTPPSTTTGSG) is disordered. Ser-182 carries the GPI-like-anchor amidated serine lipid modification. The propeptide at 183–203 (GSTVVASFGLIVSILLASLAL) is removed in mature form.

This sequence belongs to the ponticulin family. The GPI-like-anchor contains a phosphoceramide group, rather than a phosphatidyl group.

It localises to the cell membrane. Binds F-actin and nucleates actin assembly. The sequence is that of Ponticulin-like protein H (ponH) from Dictyostelium discoideum (Social amoeba).